A 93-amino-acid polypeptide reads, in one-letter code: Small ribosomal subunit protein uS15 (93 aa).

Belongs to the universal ribosomal protein uS15 family. Part of the 30S ribosomal subunit. Forms a bridge to the 50S subunit in the 70S ribosome, contacting the 23S rRNA.

One of the primary rRNA binding proteins, it binds directly to 16S rRNA where it helps nucleate assembly of the platform of the 30S subunit by binding and bridging several RNA helices of the 16S rRNA. Functionally, forms an intersubunit bridge (bridge B4) with the 23S rRNA of the 50S subunit in the ribosome. The chain is Small ribosomal subunit protein uS15 from Anaplasma marginale (strain St. Maries).